Consider the following 273-residue polypeptide: Undecaprenyl-diphosphatase (273 aa).

Helical transmembrane passes span isoleucine 3–proline 23, alanine 48–phenylalanine 68, methionine 92–isoleucine 112, leucine 116–alanine 136, isoleucine 152–phenylalanine 172, alanine 193–leucine 213, threonine 220–isoleucine 240, and isoleucine 252–tyrosine 272.

Belongs to the UppP family.

It is found in the cell membrane. The catalysed reaction is di-trans,octa-cis-undecaprenyl diphosphate + H2O = di-trans,octa-cis-undecaprenyl phosphate + phosphate + H(+). In terms of biological role, catalyzes the dephosphorylation of undecaprenyl diphosphate (UPP). Confers resistance to bacitracin. The chain is Undecaprenyl-diphosphatase from Geobacillus sp. (strain WCH70).